Here is a 748-residue protein sequence, read N- to C-terminus: Formate acetyltransferase (748 aa).

Residues 5-618 form the PFL domain; sequence NNHTNAWQGF…KTGNTPDGRK (614 aa). The active-site S-acetylcysteine intermediate is Cys412. Catalysis depends on Cys413, which acts as the Cysteine radical intermediate. Positions 625–748 constitute a Glycine radical domain; that stretch reads PGANPMHGRD…VISRTFHESM (124 aa). Gly723 carries the glycine radical modification.

Belongs to the glycyl radical enzyme (GRE) family. PFL subfamily. In terms of assembly, homodimer.

The protein resides in the cytoplasm. The enzyme catalyses formate + acetyl-CoA = pyruvate + CoA. It participates in fermentation; pyruvate fermentation; formate from pyruvate: step 1/1. Catalyzes the conversion of pyruvate to formate and acetyl-CoA. In Staphylococcus epidermidis (strain ATCC 35984 / DSM 28319 / BCRC 17069 / CCUG 31568 / BM 3577 / RP62A), this protein is Formate acetyltransferase (pflB).